The primary structure comprises 339 residues: N-acetylornithine carbamoyltransferase (339 aa).

Carbamoyl phosphate is bound by residues 49–52 (SMRT), tryptophan 77, and arginine 112. Glutamate 144 contacts N(2)-acetyl-L-ornithine. Residue 148–151 (HPCQ) participates in carbamoyl phosphate binding. Residues lysine 252 and leucine 295 each coordinate N(2)-acetyl-L-ornithine. Residue 294–295 (CL) participates in carbamoyl phosphate binding. Residue lysine 302 is modified to N6-carboxylysine. Position 322 (arginine 322) interacts with carbamoyl phosphate.

The protein belongs to the aspartate/ornithine carbamoyltransferase superfamily. AOTCase family. In terms of assembly, homotrimer.

It localises to the cytoplasm. It catalyses the reaction N(2)-acetyl-L-ornithine + carbamoyl phosphate = N(2)-acetyl-L-citrulline + phosphate + H(+). The protein operates within amino-acid biosynthesis; L-arginine biosynthesis. With respect to regulation, carboxylation at Lys-302 increases the catalytic activity of the enzyme. Is potently inhibited by N(alpha)-acetyl-N(delta)-phosphonoacetyl-L-ornithine (PALAO). Catalyzes the transfer of the carbamoyl group from carbamoyl phosphate to the delta-amino group of N(2)-acetyl-L-ornithine to produce N(2)-acetyl-L-citrulline. This is a step in an alternative arginine biosynthesis pathway. The enzyme has no activity with ornithine. This is N-acetylornithine carbamoyltransferase from Xanthomonas campestris pv. campestris (strain ATCC 33913 / DSM 3586 / NCPPB 528 / LMG 568 / P 25).